The sequence spans 506 residues: 2-isopropylmalate synthase (506 aa).

A Pyruvate carboxyltransferase domain is found at 4–266; sequence ILFMDTTLRD…EPSMTLKEIK (263 aa). Mn(2+) contacts are provided by Asp13, His201, His203, and Asn237. Residues 390–506 are regulatory domain; sequence NITQLQVHFV…KLKSFIQLVK (117 aa).

It belongs to the alpha-IPM synthase/homocitrate synthase family. LeuA type 1 subfamily. As to quaternary structure, homodimer. The cofactor is Mn(2+).

It localises to the cytoplasm. The catalysed reaction is 3-methyl-2-oxobutanoate + acetyl-CoA + H2O = (2S)-2-isopropylmalate + CoA + H(+). It functions in the pathway amino-acid biosynthesis; L-leucine biosynthesis; L-leucine from 3-methyl-2-oxobutanoate: step 1/4. Its function is as follows. Catalyzes the condensation of the acetyl group of acetyl-CoA with 3-methyl-2-oxobutanoate (2-ketoisovalerate) to form 3-carboxy-3-hydroxy-4-methylpentanoate (2-isopropylmalate). The polypeptide is 2-isopropylmalate synthase (Bacillus cereus (strain AH820)).